A 160-amino-acid polypeptide reads, in one-letter code: Non-secretory ribonuclease (160 aa).

The first 27 residues, 1–27 (MVPKLFTSPICLLLLLGLMGVEGSLHA), serve as a signal peptide directing secretion. The C-linked (Man) tryptophan glycan is linked to W34. The active-site Proton acceptor is the H42. N44 carries an N-linked (GlcNAc...) asparagine glycan. 4 disulfide bridges follow: C50–C110, C64–C122, C82–C137, and C89–C98. Y60 carries the post-translational modification 3'-nitrotyrosine. A substrate-binding site is contributed by 65 to 69 (KNQNT). 3 N-linked (GlcNAc...) asparagine glycosylation sites follow: N92, N111, and N138. H155 functions as the Proton donor in the catalytic mechanism.

This sequence belongs to the pancreatic ribonuclease family. In terms of assembly, interacts with and forms a tight 1:1 complex with RNH1. Dimerization of two such complexes may occur.

It localises to the lysosome. The protein localises to the cytoplasmic granule. It catalyses the reaction an [RNA] containing cytidine + H2O = an [RNA]-3'-cytidine-3'-phosphate + a 5'-hydroxy-ribonucleotide-3'-[RNA].. It carries out the reaction an [RNA] containing uridine + H2O = an [RNA]-3'-uridine-3'-phosphate + a 5'-hydroxy-ribonucleotide-3'-[RNA].. In terms of biological role, this is a non-secretory ribonuclease. It is a pyrimidine specific nuclease with a slight preference for U. Cytotoxin and helminthotoxin. Possesses a wide variety of biological activities. This Papio hamadryas (Hamadryas baboon) protein is Non-secretory ribonuclease (RNASE2).